Here is a 450-residue protein sequence, read N- to C-terminus: MPVAGPLEIVSLDNEARGVGRLSNEDGTPGKVVFVEGALPGERVTYRSHRAKPSYEQATLVDILRQSASRVTPQCRFFGTCGGCSMQHLDSRAQIAIKQRVLEDDLWHLAKLRPDVVFRPIAGPDWGYRYRARLTVRHVAAKGGVLVGFHERKSSYVADMTSCEVLPPHVSALLVPLRELVGRLSIVQRMPQIEVAVGQDVTALVLRILEPLTSADEAELRAFADRHAVQFWLQPKGPDTVYPFYPLDRALTYTLPEFGITMPFKPTDFTQVNHQINRVLMSRALKLLDARPGDRLLDLFCGIGNFTLPMATRGCEVMGIEGSEALTTRALANAQHNGLDGKTTFACRNLFEVSADDIAALGRFDRWLVDPPREGALAVSKAVAELSQRGGEAAALLPGRIVYVSCNPATLARDAGLLVHEAGYRLAGAGVVNMFPHTSHVESIAVFERA.

The TRAM domain maps to 1-62 (MPVAGPLEIV…PSYEQATLVD (62 aa)). Residues cysteine 75, cysteine 81, cysteine 84, and cysteine 163 each contribute to the [4Fe-4S] cluster site. S-adenosyl-L-methionine contacts are provided by glutamine 271, phenylalanine 300, asparagine 305, glutamate 321, asparagine 349, and aspartate 370. Residue cysteine 406 is the Nucleophile of the active site.

This sequence belongs to the class I-like SAM-binding methyltransferase superfamily. RNA M5U methyltransferase family. RlmD subfamily.

The enzyme catalyses uridine(1939) in 23S rRNA + S-adenosyl-L-methionine = 5-methyluridine(1939) in 23S rRNA + S-adenosyl-L-homocysteine + H(+). In terms of biological role, catalyzes the formation of 5-methyl-uridine at position 1939 (m5U1939) in 23S rRNA. In Ralstonia nicotianae (strain ATCC BAA-1114 / GMI1000) (Ralstonia solanacearum), this protein is 23S rRNA (uracil(1939)-C(5))-methyltransferase RlmD.